Here is a 156-residue protein sequence, read N- to C-terminus: Small ribosomal subunit protein uS7 (156 aa).

It belongs to the universal ribosomal protein uS7 family. In terms of assembly, part of the 30S ribosomal subunit. Contacts proteins S9 and S11.

Its function is as follows. One of the primary rRNA binding proteins, it binds directly to 16S rRNA where it nucleates assembly of the head domain of the 30S subunit. Is located at the subunit interface close to the decoding center, probably blocks exit of the E-site tRNA. The polypeptide is Small ribosomal subunit protein uS7 (Carsonella ruddii (strain PV)).